Here is an 805-residue protein sequence, read N- to C-terminus: Nitrite reductase [NAD(P)H] (805 aa).

43–79 (YNRILLSKVLQGDTDIKDITLNDWDWYEENNIQLYTN) lines the FAD pocket. Residue 193–223 (LQNELEKQGMTFLLEKQTEEIVGDDRVEGLR) coordinates NADP(+). [2Fe-2S] cluster-binding residues include Cys-418, Cys-420, Cys-453, and Cys-456. Positions 635, 641, 675, and 679 each coordinate [4Fe-4S] cluster. Cys-679 serves as a coordination point for siroheme.

It belongs to the nitrite and sulfite reductase 4Fe-4S domain family. In terms of assembly, homodimer. Siroheme is required as a cofactor. Requires [2Fe-2S] cluster as cofactor. The cofactor is [4Fe-4S] cluster. FAD serves as cofactor.

It catalyses the reaction NH4(+) + 3 NADP(+) + 2 H2O = nitrite + 3 NADPH + 5 H(+). The enzyme catalyses NH4(+) + 3 NAD(+) + 2 H2O = nitrite + 3 NADH + 5 H(+). Its pathway is nitrogen metabolism; nitrate reduction (assimilation). Functionally, required for nitrite assimilation. This chain is Nitrite reductase [NAD(P)H] (nasD), found in Bacillus subtilis (strain 168).